A 349-amino-acid polypeptide reads, in one-letter code: Nuclear distribution protein nudE homolog 1-A (349 aa).

A coiled-coil region spans residues 22-189; the sequence is VAMKYKQCSE…ELAVQQKQEK (168 aa).

It belongs to the nudE family. Self-associates. Interacts with pafah1b1. In terms of processing, phosphorylated in mitosis.

The protein localises to the cytoplasm. Its subcellular location is the cytoskeleton. The protein resides in the microtubule organizing center. It is found in the centrosome. It localises to the spindle. The protein localises to the chromosome. Its subcellular location is the centromere. The protein resides in the kinetochore. It is found in the cleavage furrow. It localises to the cytoplasmic vesicle membrane. In terms of biological role, required for centrosome duplication and formation and function of the mitotic spindle. The polypeptide is Nuclear distribution protein nudE homolog 1-A (nde1-a) (Xenopus laevis (African clawed frog)).